Here is a 763-residue protein sequence, read N- to C-terminus: Polyribonucleotide nucleotidyltransferase (763 aa).

Mg(2+) is bound by residues D526 and D532. One can recognise a KH domain in the interval 592-651 (PRITTIKVPVDKIGEVIGPKGKMINSITEETGAQISIEDDGTVFVGAADGLSAQAAIDKI). One can recognise an S1 motif domain in the interval 663 to 732 (GERFLGTVVK…NRGKISLVLV (70 aa)). A disordered region spans residues 739 to 763 (SAESAGDKGAEKAEGAAADVTPAEA). The span at 743–752 (AGDKGAEKAE) shows a compositional bias: basic and acidic residues.

It belongs to the polyribonucleotide nucleotidyltransferase family. The cofactor is Mg(2+).

It is found in the cytoplasm. It carries out the reaction RNA(n+1) + phosphate = RNA(n) + a ribonucleoside 5'-diphosphate. Involved in mRNA degradation. Catalyzes the phosphorolysis of single-stranded polyribonucleotides processively in the 3'- to 5'-direction. The protein is Polyribonucleotide nucleotidyltransferase of Mycolicibacterium smegmatis (strain ATCC 700084 / mc(2)155) (Mycobacterium smegmatis).